We begin with the raw amino-acid sequence, 803 residues long: H(+)/Cl(-) exchange transporter 7 (803 aa).

The segment at 1-46 (MANVSKKVSWSGRDRDDEEGAPLLRRTGQPDEETPLLNGAGPGARQ) is disordered. The Cytoplasmic segment spans residues 1–124 (MANVSKKVSW…TAFRTVEIKR (124 aa)). A Phosphoserine modification is found at Ser-9. The next 2 membrane-spanning stretches (helical) occupy residues 125–157 (WVIC…YRVI) and 172–195 (FSLL…VAFI). The Selectivity filter part_1 signature appears at 201 to 205 (GSGIP). Position 202 (Ser-202) interacts with chloride. The helical intramembrane region spans 204–211 (IPQIKCFL). 2 helical membrane-spanning segments follow: residues 221–239 (RLKT…VVGG) and 245–262 (EGPM…ISQG). Residues 243 to 247 (GKEGP) carry the Selectivity filter part_2 motif. Intramembrane regions (helical) lie at residues 286 to 298 (FVSA…VSAA) and 302 to 310 (PVGGVLFSL). The next 5 helical transmembrane spans lie at 320–339 (FLTW…LNFV), 373–403 (IPVF…FRIR), 408–430 (PCLQ…FVLI), 485–505 (PMTL…TYGL), and 510–533 (GVFI…MSYL). A Selectivity filter part_3 motif is present at residues 510–514 (GVFIP). Position 512 (Phe-512) interacts with chloride. The helical intramembrane region spans 543-557 (GKYALMGAAAQLGGI). The note=Loop between two helices intramembrane region spans 558–560 (VRM). Positions 561–572 (TLSLTVIMMEAT) form an intramembrane region, helical. Residues 573-576 (SNVT) constitute an intramembrane region (note=Loop between two helices). The chain crosses the membrane as a helical span at residues 577 to 595 (YGFPIMLVLMTAKIVGDVF). The Cytoplasmic segment spans residues 596–803 (IEGLYDMHIQ…GLEELSLAQT (208 aa)). Tyr-600 contacts chloride. 2 consecutive CBS domains span residues 629–693 (MSTP…VFVE) and 739–797 (MNPS…GLEE). ATP contacts are provided by residues 656 to 658 (HNG) and 781 to 784 (TRKD). Phosphoserine is present on Ser-799.

It belongs to the chloride channel (TC 2.A.49) family. ClC-7/CLCN7 subfamily. As to quaternary structure, chloride channel 7 are heteromers of alpha (CLCN7) and beta (OSTM1) subunits. In terms of tissue distribution, brain, testis, muscle and kidney.

It localises to the lysosome membrane. It carries out the reaction 2 chloride(in) + H(+)(out) = 2 chloride(out) + H(+)(in). In terms of biological role, slowly voltage-gated channel mediating the exchange of chloride ions against protons. Functions as antiporter and contributes to the acidification of the lysosome lumen and may be involved in maintaining lysosomal pH. The CLC channel family contains both chloride channels and proton-coupled anion transporters that exchange chloride or another anion for protons. The presence of conserved gating glutamate residues is typical for family members that function as antiporters. In Rattus norvegicus (Rat), this protein is H(+)/Cl(-) exchange transporter 7 (Clcn7).